The chain runs to 277 residues: Probable redox regulatory protein ML2435 (277 aa).

The protein belongs to the Rv0495c family.

Essential for maintaining intracellular redox homeostasis. This Mycobacterium leprae (strain TN) protein is Probable redox regulatory protein ML2435.